The chain runs to 124 residues: Small ribosomal subunit protein uS12 (124 aa).

Asp89 carries the post-translational modification 3-methylthioaspartic acid. The tract at residues 104–124 (ALGVEDRKRGRSKYGAKRPKA) is disordered. The span at 112–124 (RGRSKYGAKRPKA) shows a compositional bias: basic residues.

The protein belongs to the universal ribosomal protein uS12 family. In terms of assembly, part of the 30S ribosomal subunit. Contacts proteins S8 and S17. May interact with IF1 in the 30S initiation complex.

In terms of biological role, with S4 and S5 plays an important role in translational accuracy. Its function is as follows. Interacts with and stabilizes bases of the 16S rRNA that are involved in tRNA selection in the A site and with the mRNA backbone. Located at the interface of the 30S and 50S subunits, it traverses the body of the 30S subunit contacting proteins on the other side and probably holding the rRNA structure together. The combined cluster of proteins S8, S12 and S17 appears to hold together the shoulder and platform of the 30S subunit. The sequence is that of Small ribosomal subunit protein uS12 from Treponema denticola (strain ATCC 35405 / DSM 14222 / CIP 103919 / JCM 8153 / KCTC 15104).